The primary structure comprises 119 residues: Ribonuclease P protein component (119 aa).

The protein belongs to the RnpA family. As to quaternary structure, consists of a catalytic RNA component (M1 or rnpB) and a protein subunit.

It carries out the reaction Endonucleolytic cleavage of RNA, removing 5'-extranucleotides from tRNA precursor.. In terms of biological role, RNaseP catalyzes the removal of the 5'-leader sequence from pre-tRNA to produce the mature 5'-terminus. It can also cleave other RNA substrates such as 4.5S RNA. The protein component plays an auxiliary but essential role in vivo by binding to the 5'-leader sequence and broadening the substrate specificity of the ribozyme. In Photorhabdus laumondii subsp. laumondii (strain DSM 15139 / CIP 105565 / TT01) (Photorhabdus luminescens subsp. laumondii), this protein is Ribonuclease P protein component.